The sequence spans 552 residues: Mothers against decapentaplegic homolog 4 (552 aa).

Positions 1–322 (MDNMSITNTP…PISNHPAPEY (322 aa)) are mediates interaction with ZBTB7A. One can recognise an MH1 domain in the interval 18 to 142 (SIVHSLMCHR…YERVVSPGID (125 aa)). The residue at position 37 (Lys37) is an N6-acetyllysine. Residues 44–69 (VKKLKEKKDELDSLITAITTNGAHPS) form a required for interaction with TSC22D1 region. Position 71 (Cys71) interacts with Zn(2+). A Glycyl lysine isopeptide (Lys-Gly) (interchain with G-Cter in SUMO2) cross-link involves residue Lys113. The Zn(2+) site is built by Cys115, Cys127, and His132. The disordered stretch occupies residues 264 to 297 (STTTWTGSRTAPYPPNLPHHQNGHLQHHPPMPPH). The tract at residues 275-320 (PYPPNLPHHQNGHLQHHPPMPPHPGHYWPVHNELAFQPPISNHPAP) is SAD. Positions 323-552 (WCSIAYFEMD…MPIADPQPLD (230 aa)) constitute an MH2 domain. N6-acetyllysine occurs at positions 428 and 507. A Glycyl lysine isopeptide (Lys-Gly) (interchain with G-Cter in ubiquitin) cross-link involves residue Lys519.

It belongs to the dwarfin/SMAD family. In terms of assembly, monomer; in the absence of TGF-beta activation. Heterotrimer; on TGF-beta activation. Heterotrimer composed of two molecules of a C-terminally phosphorylated R-SMAD molecule, SMAD2 or SMAD3, and one molecule of SMAD4 to form the transcriptional active SMAD2/SMAD3-SMAD4 complex. Found in a ternary complex composed of SMAD4, STK11/LKB1 and STK11IP. Found in a complex with SMAD1 and YY1. Identified in a complex that contains at least ZNF451, SMAD2, SMAD3 and SMAD4. Interacts with ATF2, COPS5, DACH1, MSG1, SKI, STK11/LKB1, STK11IP and TRIM33. Associates with ZNF423 or ZNF521 in response to BMP2 leading to activate transcription of BMP target genes. Interacts with USP9X. Interacts with RBPMS. Interacts with WWTR1 (via coiled-coil domain). Interacts with CITED1 and CITED2. Interacts with PDPK1 (via PH domain). Interacts with VPS39; this interaction affects heterodimer formation with SMAD3, but not with SMAD2, and leads to inhibition of SMAD3-dependent transcription activation. Interactions with VPS39 and SMAD2 may be mutually exclusive. Interacts (via MH2 domain) with ZNF451 (via N-terminal zinc-finger domains). Interacts with ZC3H3. Interacts weakly with ZNF8. Interacts with NUP93 and IPO7; translocates SMAD4 to the nucleus through the NPC upon BMP7 stimulation resulting in activation of SMAD4 signaling. Interacts with CREB3L1, the interaction takes place upon TGFB1 induction and SMAD4 acts as a CREB3L1 coactivator to induce the expression of genes involved in the assembly of collagen extracellular matrix. Interacts with DLX1. Interacts with ZBTB7A; the interaction is direct and stimulated by TGFB1. Interacts with CREBBP; the recruitment of this transcriptional coactivator is negatively regulated by ZBTB7A. Interacts with EP300; the interaction with this transcriptional coactivator is negatively regulated by ZBTB7A. Interacts with HDAC1. Interacts (via MH2 domain) with ZMIZ1 (via SP-RING-type domain); in the TGF-beta signaling pathway increases the activity of the SMAD3/SMAD4 transcriptional complex. Interacts (via N-terminus) with TSC22D1. In terms of processing, phosphorylated by PDPK1. Monoubiquitinated on Lys-519 by E3 ubiquitin-protein ligase TRIM33. Monoubiquitination hampers its ability to form a stable complex with activated SMAD2/3 resulting in inhibition of TGF-beta/BMP signaling cascade. Deubiquitination by USP9X restores its competence to mediate TGF-beta signaling.

It localises to the cytoplasm. Its subcellular location is the nucleus. Common SMAD (co-SMAD) is the coactivator and mediator of signal transduction by TGF-beta (transforming growth factor). Component of the heterotrimeric SMAD2/SMAD3-SMAD4 complex that forms in the nucleus and is required for the TGF-mediated signaling. Promotes binding of the SMAD2/SMAD4/FAST-1 complex to DNA and provides an activation function required for SMAD1 or SMAD2 to stimulate transcription. Component of the multimeric SMAD3/SMAD4/JUN/FOS complex which forms at the AP1 promoter site; required for synergistic transcriptional activity in response to TGF-beta. Acts synergistically with SMAD1 and YY1 in bone morphogenetic protein (BMP)-mediated cardiac-specific gene expression. Binds to SMAD binding elements (SBEs) (5'-GTCT/AGAC-3') within BMP response element (BMPRE) of cardiac activating regions. May act as a tumor suppressor. Positively regulates PDPK1 kinase activity by stimulating its dissociation from the 14-3-3 protein YWHAQ which acts as a negative regulator. In muscle physiology, plays a central role in the balance between atrophy and hypertrophy. When recruited by MSTN, promotes atrophy response via phosphorylated SMAD2/4. MSTN decrease causes SMAD4 release and subsequent recruitment by the BMP pathway to promote hypertrophy via phosphorylated SMAD1/5/8. The chain is Mothers against decapentaplegic homolog 4 (SMAD4) from Sus scrofa (Pig).